Reading from the N-terminus, the 76-residue chain is Protein sprouty homolog 1 (76 aa).

One can recognise an SPR domain in the interval 1-52 (NPCSCSQSHCCSRYLCMGAMSLFLPCLLCYPPAKGCLKLCRGCYDRVNRPGC).

Belongs to the sprouty family. In terms of tissue distribution, brain and interlimb region.

Its subcellular location is the cytoplasm. It is found in the membrane. In terms of biological role, inhibits fibroblast growth factor (FGF)-induced retinal lens fiber differentiation. Inhibits TGFB-induced epithelial-to-mesenchymal transition in lens epithelial cells. The polypeptide is Protein sprouty homolog 1 (SPRY1) (Gallus gallus (Chicken)).